The following is a 283-amino-acid chain: NAD kinase (283 aa).

Aspartate 66 functions as the Proton acceptor in the catalytic mechanism. Residues 66 to 67 (DG), 137 to 138 (ND), arginine 165, aspartate 167, and 178 to 183 (TGYSLS) each bind NAD(+).

The protein belongs to the NAD kinase family. The cofactor is a divalent metal cation.

Its subcellular location is the cytoplasm. It catalyses the reaction NAD(+) + ATP = ADP + NADP(+) + H(+). In terms of biological role, involved in the regulation of the intracellular balance of NAD and NADP, and is a key enzyme in the biosynthesis of NADP. Catalyzes specifically the phosphorylation on 2'-hydroxyl of the adenosine moiety of NAD to yield NADP. This chain is NAD kinase, found in Chloroherpeton thalassium (strain ATCC 35110 / GB-78).